Here is a 215-residue protein sequence, read N- to C-terminus: 7-cyano-7-deazaguanine synthase (215 aa).

Residue 8-18 coordinates ATP; sequence LSAGLDSTVSL. Zn(2+)-binding residues include Cys-191, Cys-199, Cys-202, and Cys-205.

The protein belongs to the QueC family. Homodimer. It depends on Zn(2+) as a cofactor.

It catalyses the reaction 7-carboxy-7-deazaguanine + NH4(+) + ATP = 7-cyano-7-deazaguanine + ADP + phosphate + H2O + H(+). It participates in purine metabolism; 7-cyano-7-deazaguanine biosynthesis. Functionally, catalyzes the ATP-dependent conversion of 7-carboxy-7-deazaguanine (CDG) to 7-cyano-7-deazaguanine (preQ(0)). In Carboxydothermus hydrogenoformans (strain ATCC BAA-161 / DSM 6008 / Z-2901), this protein is 7-cyano-7-deazaguanine synthase.